Here is a 467-residue protein sequence, read N- to C-terminus: Probable serine hydroxymethyltransferase, cytosolic (467 aa).

Lys243 is subject to N6-(pyridoxal phosphate)lysine.

Belongs to the SHMT family. Homotetramer. It depends on pyridoxal 5'-phosphate as a cofactor.

Its subcellular location is the cytoplasm. The enzyme catalyses (6R)-5,10-methylene-5,6,7,8-tetrahydrofolate + glycine + H2O = (6S)-5,6,7,8-tetrahydrofolate + L-serine. Its pathway is one-carbon metabolism; tetrahydrofolate interconversion. Interconversion of serine and glycine. The chain is Probable serine hydroxymethyltransferase, cytosolic from Schizosaccharomyces pombe (strain 972 / ATCC 24843) (Fission yeast).